Consider the following 389-residue polypeptide: Chalcone synthase 1A (389 aa).

Cysteine 164 is an active-site residue.

It belongs to the thiolase-like superfamily. Chalcone/stilbene synthases family.

The enzyme catalyses (E)-4-coumaroyl-CoA + 3 malonyl-CoA + 3 H(+) = 2',4,4',6'-tetrahydroxychalcone + 3 CO2 + 4 CoA. The protein operates within secondary metabolite biosynthesis; flavonoid biosynthesis. In terms of biological role, the primary product of this enzyme is 4,2',4',6'-tetrahydroxychalcone (also termed naringenin-chalcone or chalcone) which can under specific conditions spontaneously isomerize into naringenin. The sequence is that of Chalcone synthase 1A (CHS1A) from Solanum tuberosum (Potato).